Consider the following 409-residue polypeptide: Argininosuccinate synthase (409 aa).

ATP-binding positions include 12-20 (AYSGGLDTS) and A39. Positions 90 and 95 each coordinate L-citrulline. Residue G120 participates in ATP binding. L-aspartate-binding residues include T122, N126, and D127. N126 contacts L-citrulline. Residues R130, S181, S190, E266, and Y278 each coordinate L-citrulline.

This sequence belongs to the argininosuccinate synthase family. Type 1 subfamily. In terms of assembly, homotetramer.

The protein resides in the cytoplasm. It carries out the reaction L-citrulline + L-aspartate + ATP = 2-(N(omega)-L-arginino)succinate + AMP + diphosphate + H(+). It participates in amino-acid biosynthesis; L-arginine biosynthesis; L-arginine from L-ornithine and carbamoyl phosphate: step 2/3. The sequence is that of Argininosuccinate synthase from Gluconacetobacter diazotrophicus (strain ATCC 49037 / DSM 5601 / CCUG 37298 / CIP 103539 / LMG 7603 / PAl5).